A 301-amino-acid chain; its full sequence is Protease HtpX (301 aa).

2 consecutive transmembrane segments (helical) span residues 4–24 and 44–64; these read IGLFLLTNLAILVVLGVVLFI and TGLLIIAAVIGFGGSFISLAM. Residue histidine 150 participates in Zn(2+) binding. Glutamate 151 is an active-site residue. Histidine 154 contacts Zn(2+). 2 helical membrane passes run 165 to 185 and 201 to 221; these read LIQGVVNTFVVFFSRIIGHFV and FITSIFAQIVLGILASVIVMW. Position 227 (glutamate 227) interacts with Zn(2+).

This sequence belongs to the peptidase M48B family. Zn(2+) serves as cofactor.

It is found in the cell inner membrane. This chain is Protease HtpX, found in Alkalilimnicola ehrlichii (strain ATCC BAA-1101 / DSM 17681 / MLHE-1).